The chain runs to 216 residues: FMN-dependent NADH:quinone oxidoreductase (216 aa).

FMN contacts are provided by residues serine 10 and 15-17 (SIS).

It belongs to the azoreductase type 1 family. In terms of assembly, homodimer. FMN serves as cofactor.

It carries out the reaction 2 a quinone + NADH + H(+) = 2 a 1,4-benzosemiquinone + NAD(+). The catalysed reaction is N,N-dimethyl-1,4-phenylenediamine + anthranilate + 2 NAD(+) = 2-(4-dimethylaminophenyl)diazenylbenzoate + 2 NADH + 2 H(+). Functionally, quinone reductase that provides resistance to thiol-specific stress caused by electrophilic quinones. Also exhibits azoreductase activity. Catalyzes the reductive cleavage of the azo bond in aromatic azo compounds to the corresponding amines. The polypeptide is FMN-dependent NADH:quinone oxidoreductase (Nocardia farcinica (strain IFM 10152)).